Consider the following 196-residue polypeptide: ATP-dependent Clp protease proteolytic subunit (196 aa).

Ser-101 functions as the Nucleophile in the catalytic mechanism. Residue His-126 is part of the active site.

It belongs to the peptidase S14 family. As to quaternary structure, component of the chloroplastic Clp protease core complex.

The protein localises to the plastid. It localises to the chloroplast stroma. It carries out the reaction Hydrolysis of proteins to small peptides in the presence of ATP and magnesium. alpha-casein is the usual test substrate. In the absence of ATP, only oligopeptides shorter than five residues are hydrolyzed (such as succinyl-Leu-Tyr-|-NHMec, and Leu-Tyr-Leu-|-Tyr-Trp, in which cleavage of the -Tyr-|-Leu- and -Tyr-|-Trp bonds also occurs).. Functionally, cleaves peptides in various proteins in a process that requires ATP hydrolysis. Has a chymotrypsin-like activity. Plays a major role in the degradation of misfolded proteins. This chain is ATP-dependent Clp protease proteolytic subunit, found in Populus trichocarpa (Western balsam poplar).